The following is a 329-amino-acid chain: 4-hydroxythreonine-4-phosphate dehydrogenase (329 aa).

Residues His136 and Thr137 each coordinate substrate. The a divalent metal cation site is built by His166, His211, and His266. Substrate is bound by residues Lys274, Asn283, and Arg292.

Belongs to the PdxA family. In terms of assembly, homodimer. Zn(2+) serves as cofactor. The cofactor is Mg(2+). Requires Co(2+) as cofactor.

Its subcellular location is the cytoplasm. It carries out the reaction 4-(phosphooxy)-L-threonine + NAD(+) = 3-amino-2-oxopropyl phosphate + CO2 + NADH. It functions in the pathway cofactor biosynthesis; pyridoxine 5'-phosphate biosynthesis; pyridoxine 5'-phosphate from D-erythrose 4-phosphate: step 4/5. Catalyzes the NAD(P)-dependent oxidation of 4-(phosphooxy)-L-threonine (HTP) into 2-amino-3-oxo-4-(phosphooxy)butyric acid which spontaneously decarboxylates to form 3-amino-2-oxopropyl phosphate (AHAP). In Escherichia coli (strain K12 / MC4100 / BW2952), this protein is 4-hydroxythreonine-4-phosphate dehydrogenase.